A 330-amino-acid polypeptide reads, in one-letter code: Beta-ketoacyl-[acyl-carrier-protein] synthase III (330 aa).

Catalysis depends on residues C114 and H254. The tract at residues 255 to 259 is ACP-binding; sequence QANLR. The active site involves N284.

Belongs to the thiolase-like superfamily. FabH family. As to quaternary structure, homodimer.

Its subcellular location is the cytoplasm. It catalyses the reaction malonyl-[ACP] + acetyl-CoA + H(+) = 3-oxobutanoyl-[ACP] + CO2 + CoA. It functions in the pathway lipid metabolism; fatty acid biosynthesis. Its function is as follows. Catalyzes the condensation reaction of fatty acid synthesis by the addition to an acyl acceptor of two carbons from malonyl-ACP. Catalyzes the first condensation reaction which initiates fatty acid synthesis and may therefore play a role in governing the total rate of fatty acid production. Possesses both acetoacetyl-ACP synthase and acetyl transacylase activities. Its substrate specificity determines the biosynthesis of branched-chain and/or straight-chain of fatty acids. This is Beta-ketoacyl-[acyl-carrier-protein] synthase III from Roseiflexus castenholzii (strain DSM 13941 / HLO8).